The chain runs to 188 residues: GTP-dependent dephospho-CoA kinase (188 aa).

Residues Asp43, Val44, Asp62, Glu121, and Asp144 each coordinate GTP.

This sequence belongs to the GTP-dependent DPCK family.

It catalyses the reaction 3'-dephospho-CoA + GTP = GDP + CoA + H(+). The protein operates within cofactor biosynthesis; coenzyme A biosynthesis. In terms of biological role, catalyzes the GTP-dependent phosphorylation of the 3'-hydroxyl group of dephosphocoenzyme A to form coenzyme A (CoA). The protein is GTP-dependent dephospho-CoA kinase of Methanococcoides burtonii (strain DSM 6242 / NBRC 107633 / OCM 468 / ACE-M).